The sequence spans 391 residues: Zinc finger protein ubi-d4 (391 aa).

Residue A2 is modified to N-acetylalanine. Residues K10, K99, K107, and K108 each participate in a glycyl lysine isopeptide (Lys-Gly) (interchain with G-Cter in SUMO2) cross-link. Disordered regions lie at residues 79 to 146 and 165 to 196; these read WRKK…LGEF and DDLD…ARKK. 2 stretches are compositionally biased toward basic and acidic residues: residues 100–110 and 126–140; these read PDTDQTLKKEG and DPLE…RVDD. The residue at position 142 (S142) is a Phosphoserine. A compositionally biased stretch (acidic residues) spans 165-174; it reads DDLDDEDYEE. Phosphotyrosine is present on Y172. Phosphothreonine is present on T176. Glycyl lysine isopeptide (Lys-Gly) (interchain with G-Cter in SUMO2) cross-links involve residues K178 and K196. S200 is modified (phosphoserine). The segment at 209–232 adopts a C2H2-type zinc-finger fold; the sequence is YACDICGKRYKNRPGLSYHYAHSH. Residues 233-266 form a disordered region; the sequence is LAEEEGEDKEDSQPPTPVSQRSEEQKSKKGPDGL. Residue S244 is modified to Phosphoserine. Residues 253–263 show a composition bias toward basic and acidic residues; sequence RSEEQKSKKGP. 2 PHD-type zinc fingers span residues 270–330 and 327–377; these read NNYC…CKCC and CKCC…CLDL. S280 carries the phosphoserine modification. K281 is covalently cross-linked (Glycyl lysine isopeptide (Lys-Gly) (interchain with G-Cter in SUMO2)).

Belongs to the requiem/DPF family. In terms of assembly, interacts with the nucleosomes, in particular nucleosomes bearing histone H3 crotonylated at 'Lys-14' (H3K14cr) for which DPF2 has high affinity. Also interacts (via PHD-type zinc finger domains) with histone H3 butyrylated at 'Lys-14' (H3K14bu), histone H3 propionylated at 'Lys-14' (H3K14pr), and histone H3 acetylated at 'Lys-14' (H3K14ac). Interacts with histone H3 acetylated at 'Lys-9' (H3K9ac), histone H3 di-methylated at 'Lys-9' (H3K9me2), and histone H3 tri-methylated at 'Lys-9' (H3K9me3). Interacts with histone H4 acetylated at 'Lys-12' (H4K12ac). Interacts with histone H4 acetylated at 'Lys-16' (H4K16ac). Interacts with SWI/SNF complex components. Interacts with SMARCA2, SMARCA4, SMARCB1 and SMARCD1. Interacts with SMARCC1, SMARCC2 and ACTL6A. Interacts with RUNX1. Ubiquitous.

The protein resides in the nucleus. The protein localises to the cytoplasm. Plays an active role in transcriptional regulation by binding modified histones H3 and H4. Is a negative regulator of myeloid differentiation of hematopoietic progenitor cells. Might also have a role in the development and maturation of lymphoid cells. Involved in the regulation of non-canonical NF-kappa-B pathway. The chain is Zinc finger protein ubi-d4 (DPF2) from Homo sapiens (Human).